The sequence spans 257 residues: 1-(5-phosphoribosyl)-5-[(5-phosphoribosylamino)methylideneamino] imidazole-4-carboxamide isomerase (257 aa).

The protein belongs to the HisA/HisF family.

The protein localises to the cytoplasm. The enzyme catalyses 1-(5-phospho-beta-D-ribosyl)-5-[(5-phospho-beta-D-ribosylamino)methylideneamino]imidazole-4-carboxamide = 5-[(5-phospho-1-deoxy-D-ribulos-1-ylimino)methylamino]-1-(5-phospho-beta-D-ribosyl)imidazole-4-carboxamide. It participates in amino-acid biosynthesis; L-histidine biosynthesis; L-histidine from 5-phospho-alpha-D-ribose 1-diphosphate: step 4/9. The protein is 1-(5-phosphoribosyl)-5-[(5-phosphoribosylamino)methylideneamino] imidazole-4-carboxamide isomerase (his-7) of Neurospora crassa (strain ATCC 24698 / 74-OR23-1A / CBS 708.71 / DSM 1257 / FGSC 987).